A 366-amino-acid polypeptide reads, in one-letter code: Sigma54-dependent transcriptional activator SfnR (366 aa).

The 230-residue stretch at Q21 to L250 folds into the Sigma-54 factor interaction domain. ATP is bound by residues G49–E56 and A112–E121.

Involved in the dimethyl sulfide degradation pathway. Activates the expression of sfnG and sfnF. This Pseudomonas putida (Arthrobacter siderocapsulatus) protein is Sigma54-dependent transcriptional activator SfnR.